Consider the following 352-residue polypeptide: Thiamine-phosphate synthase (352 aa).

Positions 1 to 128 (MNPTPSETSL…AAEAAAIRYG (128 aa)) are unknown. A disordered region spans residues 63–85 (SYKQARSTSTDTGAGLKHPAQLD). The thiamine-phosphate synthase stretch occupies residues 129 to 352 (LYDLEVTCLN…LLQQLDQATI (224 aa)). Residues 180-184 (QYRCK) and asparagine 212 contribute to the 4-amino-2-methyl-5-(diphosphooxymethyl)pyrimidine site. 2 residues coordinate Mg(2+): aspartate 213 and aspartate 232. 4-amino-2-methyl-5-(diphosphooxymethyl)pyrimidine-binding residues include serine 251 and lysine 280. Glycine 307 is a binding site for 2-[(2R,5Z)-2-carboxy-4-methylthiazol-5(2H)-ylidene]ethyl phosphate.

The protein belongs to the thiamine-phosphate synthase family. Mg(2+) is required as a cofactor.

The catalysed reaction is 2-[(2R,5Z)-2-carboxy-4-methylthiazol-5(2H)-ylidene]ethyl phosphate + 4-amino-2-methyl-5-(diphosphooxymethyl)pyrimidine + 2 H(+) = thiamine phosphate + CO2 + diphosphate. It catalyses the reaction 2-(2-carboxy-4-methylthiazol-5-yl)ethyl phosphate + 4-amino-2-methyl-5-(diphosphooxymethyl)pyrimidine + 2 H(+) = thiamine phosphate + CO2 + diphosphate. It carries out the reaction 4-methyl-5-(2-phosphooxyethyl)-thiazole + 4-amino-2-methyl-5-(diphosphooxymethyl)pyrimidine + H(+) = thiamine phosphate + diphosphate. The protein operates within cofactor biosynthesis; thiamine diphosphate biosynthesis; thiamine phosphate from 4-amino-2-methyl-5-diphosphomethylpyrimidine and 4-methyl-5-(2-phosphoethyl)-thiazole: step 1/1. Condenses 4-methyl-5-(beta-hydroxyethyl)thiazole monophosphate (THZ-P) and 2-methyl-4-amino-5-hydroxymethyl pyrimidine pyrophosphate (HMP-PP) to form thiamine monophosphate (TMP). In Synechococcus sp. (strain CC9605), this protein is Thiamine-phosphate synthase.